Reading from the N-terminus, the 182-residue chain is Ribosome-recycling factor (182 aa).

A disordered region spans residues 136 to 160; the sequence is VKKSEKDGDLSEDQSRDEQEKIQKE.

This sequence belongs to the RRF family.

Its subcellular location is the cytoplasm. In terms of biological role, responsible for the release of ribosomes from messenger RNA at the termination of protein biosynthesis. May increase the efficiency of translation by recycling ribosomes from one round of translation to another. The sequence is that of Ribosome-recycling factor from Prochlorococcus marinus (strain NATL1A).